We begin with the raw amino-acid sequence, 55 residues long: Large ribosomal subunit protein bL33B (55 aa).

The protein belongs to the bacterial ribosomal protein bL33 family.

This chain is Large ribosomal subunit protein bL33B, found in Kineococcus radiotolerans (strain ATCC BAA-149 / DSM 14245 / SRS30216).